The sequence spans 611 residues: Chaperone protein DnaK (611 aa).

Threonine 173 is subject to Phosphothreonine; by autocatalysis. Over residues 577–592 the composition is skewed to low complexity; sequence QAAAGQAEGAQGAQDA. Residues 577-611 are disordered; sequence QAAAGQAEGAQGAQDAGTKKDNVVDAEFEEVKEDK. Residues 600–611 show a composition bias toward acidic residues; the sequence is VDAEFEEVKEDK.

Belongs to the heat shock protein 70 family.

Its function is as follows. Acts as a chaperone. The polypeptide is Chaperone protein DnaK (Bacillus cereus (strain G9842)).